We begin with the raw amino-acid sequence, 357 residues long: Sulfate/thiosulfate import ATP-binding protein CysA (357 aa).

The ABC transporter domain maps to 3-237 (IVIQNVSKSF…PKSPFVYDFL (235 aa)). 35 to 42 (GPSGSGKT) provides a ligand contact to ATP.

Belongs to the ABC transporter superfamily. Sulfate/tungstate importer (TC 3.A.1.6) family. In terms of assembly, the complex is composed of two ATP-binding proteins (CysA), two transmembrane proteins (CysT and CysW) and a solute-binding protein (CysP).

Its subcellular location is the cell membrane. The catalysed reaction is sulfate(out) + ATP + H2O = sulfate(in) + ADP + phosphate + H(+). It catalyses the reaction thiosulfate(out) + ATP + H2O = thiosulfate(in) + ADP + phosphate + H(+). In terms of biological role, part of the ABC transporter complex CysAWTP involved in sulfate/thiosulfate import. Responsible for energy coupling to the transport system. The sequence is that of Sulfate/thiosulfate import ATP-binding protein CysA from Halalkalibacterium halodurans (strain ATCC BAA-125 / DSM 18197 / FERM 7344 / JCM 9153 / C-125) (Bacillus halodurans).